The following is a 278-amino-acid chain: 4-deoxy-L-threo-5-hexosulose-uronate ketol-isomerase (278 aa).

Zn(2+) is bound by residues H196, H198, E203, and H245.

It belongs to the KduI family. Requires Zn(2+) as cofactor.

It catalyses the reaction 5-dehydro-4-deoxy-D-glucuronate = 3-deoxy-D-glycero-2,5-hexodiulosonate. Its pathway is glycan metabolism; pectin degradation; 2-dehydro-3-deoxy-D-gluconate from pectin: step 4/5. Functionally, catalyzes the isomerization of 5-dehydro-4-deoxy-D-glucuronate to 3-deoxy-D-glycero-2,5-hexodiulosonate. In Salmonella choleraesuis (strain SC-B67), this protein is 4-deoxy-L-threo-5-hexosulose-uronate ketol-isomerase.